A 317-amino-acid polypeptide reads, in one-letter code: uncharacterized protein (317 aa).

A run of 7 helical transmembrane segments spans residues 24–44 (ISII…TGIM), 63–83 (LSIS…SILA), 136–156 (LGVA…ISED), 187–207 (LIPI…IGFF), 229–249 (ILAL…GGFL), 252–272 (GILS…LTFS), and 295–315 (IVMV…AGLL).

This sequence to M.jannaschii MJ0880, MJ1556 and MJ1589.

The protein localises to the cell membrane. This is an uncharacterized protein from Methanocaldococcus jannaschii (strain ATCC 43067 / DSM 2661 / JAL-1 / JCM 10045 / NBRC 100440) (Methanococcus jannaschii).